The sequence spans 478 residues: Signal recognition particle receptor FtsY (478 aa).

Basic and acidic residues-rich tracts occupy residues 14–33 and 45–56; these read KDKAETEERPQEDAALERGN and AEAHDAVDKDPV. The disordered stretch occupies residues 14-94; the sequence is KDKAETEERP…DAPLLPGAEL (81 aa). The segment covering 71-86 has biased composition (acidic residues); it reads EAVDVAPAEDDEEEDA. GTP contacts are provided by residues 283–290, 365–369, and 429–432; these read GVNGTGKT, DTAGR, and TKLD.

It belongs to the GTP-binding SRP family. FtsY subfamily. Part of the signal recognition particle protein translocation system, which is composed of SRP and FtsY. SRP is a ribonucleoprotein composed of Ffh and a 4.5S RNA molecule.

The protein resides in the cell inner membrane. The protein localises to the cytoplasm. The enzyme catalyses GTP + H2O = GDP + phosphate + H(+). Functionally, involved in targeting and insertion of nascent membrane proteins into the cytoplasmic membrane. Acts as a receptor for the complex formed by the signal recognition particle (SRP) and the ribosome-nascent chain (RNC). Interaction with SRP-RNC leads to the transfer of the RNC complex to the Sec translocase for insertion into the membrane, the hydrolysis of GTP by both Ffh and FtsY, and the dissociation of the SRP-FtsY complex into the individual components. The polypeptide is Signal recognition particle receptor FtsY (Agrobacterium fabrum (strain C58 / ATCC 33970) (Agrobacterium tumefaciens (strain C58))).